A 118-amino-acid chain; its full sequence is Small ribosomal subunit protein uS13 (118 aa).

Positions 97–118 are disordered; it reads VRGQRTKTNARTCKGPRKAIKK.

It belongs to the universal ribosomal protein uS13 family. In terms of assembly, part of the 30S ribosomal subunit. Forms a loose heterodimer with protein S19. Forms two bridges to the 50S subunit in the 70S ribosome.

In terms of biological role, located at the top of the head of the 30S subunit, it contacts several helices of the 16S rRNA. In the 70S ribosome it contacts the 23S rRNA (bridge B1a) and protein L5 of the 50S subunit (bridge B1b), connecting the 2 subunits; these bridges are implicated in subunit movement. Contacts the tRNAs in the A and P-sites. The chain is Small ribosomal subunit protein uS13 from Buchnera aphidicola subsp. Schizaphis graminum (strain Sg).